The chain runs to 56 residues: Prokaryotic ubiquitin-like protein UBact (56 aa).

The segment covering 1–28 (MPQDQQRKKQFDPNPNRDDSQRKTPVDK) has biased composition (basic and acidic residues). The tract at residues 1-33 (MPQDQQRKKQFDPNPNRDDSQRKTPVDKEIDDI) is disordered. At Gln56 the chain carries Deamidated glutamine. Gln56 is covalently cross-linked (Isoglutamyl lysine isopeptide (Gln-Lys) (interchain with K-? in acceptor proteins)).

Belongs to the ubiquitin-like protein UBact family. May be modified by deamidation of its C-terminal glutamine to glutamate by the adjacently encoded deamidase. This could be a prerequisite to the subsequent conjugation, as shown in the other prokaryotic ubiquitin-like protein Pup.

Its function is as follows. May function as a protein modifier covalently attached to lysine residues of substrate proteins. This may serve to target the modified proteins for degradation by proteasomes. This is Prokaryotic ubiquitin-like protein UBact from Yanofskybacteria sp. (strain GW2011_GWA1_39_13).